The primary structure comprises 174 residues: Heat shock protein 22 (174 aa).

The region spanning 44–154 is the sHSP domain; it reads QIARWQEQEF…TLKEREVTIE (111 aa). Threonine 152 carries the phosphothreonine modification. The segment at 152 to 174 is disordered; sequence TIEQTGEPAKKSAEEPNDKAASQ. Basic and acidic residues predominate over residues 159–174; that stretch reads PAKKSAEEPNDKAASQ.

Belongs to the small heat shock protein (HSP20) family.

The sequence is that of Heat shock protein 22 (Hsp22) from Drosophila melanogaster (Fruit fly).